The sequence spans 425 residues: Serine--tRNA ligase (425 aa).

Residue 230–232 (TAE) coordinates L-serine. Residue 261–263 (RSE) coordinates ATP. An L-serine-binding site is contributed by Glu-284. 348 to 351 (EISS) serves as a coordination point for ATP. L-serine is bound at residue Ser-384.

This sequence belongs to the class-II aminoacyl-tRNA synthetase family. Type-1 seryl-tRNA synthetase subfamily. As to quaternary structure, homodimer. The tRNA molecule binds across the dimer.

The protein resides in the cytoplasm. It carries out the reaction tRNA(Ser) + L-serine + ATP = L-seryl-tRNA(Ser) + AMP + diphosphate + H(+). It catalyses the reaction tRNA(Sec) + L-serine + ATP = L-seryl-tRNA(Sec) + AMP + diphosphate + H(+). It participates in aminoacyl-tRNA biosynthesis; selenocysteinyl-tRNA(Sec) biosynthesis; L-seryl-tRNA(Sec) from L-serine and tRNA(Sec): step 1/1. In terms of biological role, catalyzes the attachment of serine to tRNA(Ser). Is also able to aminoacylate tRNA(Sec) with serine, to form the misacylated tRNA L-seryl-tRNA(Sec), which will be further converted into selenocysteinyl-tRNA(Sec). The sequence is that of Serine--tRNA ligase from Maridesulfovibrio salexigens (strain ATCC 14822 / DSM 2638 / NCIMB 8403 / VKM B-1763) (Desulfovibrio salexigens).